The following is a 79-amino-acid chain: uncharacterized protein (79 aa).

A signal peptide spans 1 to 24; the sequence is MNKFLNLIGLAFVLVLCAFSCSNA. The 47-residue stretch at 32 to 78 folds into the LysM domain; it reads SWHVAQKGYTCYDMATSCKVTLDQFMRTNKLDNNACKLVQIGRKYCC.

The protein localises to the secreted. This is an uncharacterized protein from Dictyostelium discoideum (Social amoeba).